The chain runs to 707 residues: Elongation factor G (707 aa).

A tr-type G domain is found at 8 to 294; sequence ERYRNFGIIA…GVVDYLPSPL (287 aa). GTP-binding positions include 17–24, 92–96, and 146–149; these read AHIDAGKT, DTPGH, and NKMD.

Belongs to the TRAFAC class translation factor GTPase superfamily. Classic translation factor GTPase family. EF-G/EF-2 subfamily.

It is found in the cytoplasm. Catalyzes the GTP-dependent ribosomal translocation step during translation elongation. During this step, the ribosome changes from the pre-translocational (PRE) to the post-translocational (POST) state as the newly formed A-site-bound peptidyl-tRNA and P-site-bound deacylated tRNA move to the P and E sites, respectively. Catalyzes the coordinated movement of the two tRNA molecules, the mRNA and conformational changes in the ribosome. This chain is Elongation factor G, found in Hyphomonas neptunium (strain ATCC 15444).